The chain runs to 29 residues: Cuticle protein 36 (29 aa).

Its function is as follows. Component of the cuticle of migratory locust which contains more than 100 different structural proteins. The polypeptide is Cuticle protein 36 (Locusta migratoria (Migratory locust)).